We begin with the raw amino-acid sequence, 73 residues long: MARITVEDCLAEVGNRFLIVQMAIKRVKQYREGYSPLVESKNKEIVTALREIAATKVLPESYHTADGKKPGSE.

Belongs to the RNA polymerase subunit omega family. The RNAP catalytic core consists of 2 alpha, 1 beta, 1 beta' and 1 omega subunit. When a sigma factor is associated with the core the holoenzyme is formed, which can initiate transcription.

It catalyses the reaction RNA(n) + a ribonucleoside 5'-triphosphate = RNA(n+1) + diphosphate. Its function is as follows. Promotes RNA polymerase assembly. Latches the N- and C-terminal regions of the beta' subunit thereby facilitating its interaction with the beta and alpha subunits. This Maridesulfovibrio salexigens (strain ATCC 14822 / DSM 2638 / NCIMB 8403 / VKM B-1763) (Desulfovibrio salexigens) protein is DNA-directed RNA polymerase subunit omega.